Consider the following 207-residue polypeptide: Large ribosomal subunit protein uL4 (207 aa).

The disordered stretch occupies residues Lys-52–Gly-76.

It belongs to the universal ribosomal protein uL4 family. Part of the 50S ribosomal subunit.

One of the primary rRNA binding proteins, this protein initially binds near the 5'-end of the 23S rRNA. It is important during the early stages of 50S assembly. It makes multiple contacts with different domains of the 23S rRNA in the assembled 50S subunit and ribosome. Functionally, forms part of the polypeptide exit tunnel. This chain is Large ribosomal subunit protein uL4, found in Myxococcus xanthus (strain DK1622).